A 328-amino-acid polypeptide reads, in one-letter code: MLNEFPIFDYEDIQLIPNKCVIKSRAEADTSVTLGNHTFKLPVVPANMQTILDENVAEQLAKGGYFYIMHRFDEAGRIPFIKRMHDQGLIASISVGVKDYEYDFVRQLKTDAPEYITIDIAHGHADSVISMIQHIKKELPDTFVIAGNVGTPEAVRELENAGADATKVGIGPGKVCITKVKTGFGTGGWQLAALRWCAKAARKPIIADGGIRTHGDIAKSIRFGASMVMIGSLFAGHIESPGKTIEVDGEQFKEYYGSASQYQKGAYKNVEGKRILLPAKGHLQDTLTEMEQDLQSAISYAGGRQVADLKHVDYVIVKNSIWNGDASH.

Catalysis depends on C176, which acts as the Thioimidate intermediate. 205 to 228 (IIADGGIRTHGDIAKSIRFGASMV) serves as a coordination point for NADP(+).

It belongs to the IMPDH/GMPR family. GuaC type 2 subfamily.

It carries out the reaction IMP + NH4(+) + NADP(+) = GMP + NADPH + 2 H(+). Functionally, catalyzes the irreversible NADPH-dependent deamination of GMP to IMP. It functions in the conversion of nucleobase, nucleoside and nucleotide derivatives of G to A nucleotides, and in maintaining the intracellular balance of A and G nucleotides. This Streptococcus pneumoniae (strain Hungary19A-6) protein is GMP reductase.